Consider the following 394-residue polypeptide: Guanine nucleotide-binding protein G(s) subunit alpha isoforms short (394 aa).

A disordered region spans residues 1–23; that stretch reads MGCLGNSKTEDQRNEEKAQREAN. Residue Gly2 is the site of N-palmitoyl glycine attachment. Residue Cys3 is the site of S-palmitoyl cysteine attachment. Over residues 8–23 the composition is skewed to basic and acidic residues; it reads KTEDQRNEEKAQREAN. The region spanning 39 to 394 is the G-alpha domain; the sequence is ATHRLLLLGA…RMHLRQYELL (356 aa). The segment at 42–55 is G1 motif; it reads RLLLLGAGESGKST. A GTP-binding site is contributed by 47–55; that stretch reads GAGESGKST. A Mg(2+)-binding site is contributed by Ser54. The segment at 68–91 is disordered; that stretch reads FNGEGGEEDPQAARSNSDGEKATK. The interval 196-204 is G2 motif; sequence DLLRCRVLT. Residues 197–204, 223–227, and 292–295 contribute to the GTP site; these read LLRCRVLT, DVGGQ, and NKQD. A Mg(2+)-binding site is contributed by Thr204. A G3 motif region spans residues 219 to 228; that stretch reads FHMFDVGGQR. Residues 288–295 form a G4 motif region; sequence ILFLNKQD. Lys300 is covalently cross-linked (Glycyl lysine isopeptide (Lys-Gly) (interchain with G-Cter in ubiquitin)). Ser352 is modified (phosphoserine). Residues 364 to 369 form a G5 motif region; the sequence is TCAVDT. Ala366 provides a ligand contact to GTP.

This sequence belongs to the G-alpha family. G(s) subfamily. Heterotrimeric G proteins are composed of 3 units; alpha, beta and gamma. The alpha chain contains the guanine nucleotide binding site. Component of the TAS2R14-GNAS2 complex, consisting of TAS2R14, GNAS2, GNB1 and GNG2; within the complex interacts with TAS2R14; this complex plays a role in the perception of bitterness. Interacts with CRY1; the interaction may block GPCR-mediated regulation of cAMP concentrations. Interacts with ADCY6 and stimulates its adenylyl cyclase activity. Interacts with ADCY2 and ADCY5. Stimulates the ADCY5 adenylyl cyclase activity. Interacts (GDP-bound form) with RIC8B; promoting GNAS folding and association with the plasma membrane. Interaction with SASH1. Interacts with GASL2L2.

It localises to the cell membrane. The enzyme catalyses GTP + H2O = GDP + phosphate + H(+). In terms of biological role, guanine nucleotide-binding proteins (G proteins) function as transducers in numerous signaling pathways controlled by G protein-coupled receptors (GPCRs). The alpha chain contains the guanine nucleotide binding site and alternates between an active, GTP-bound state and an inactive, GDP-bound state. Signaling by an activated GPCR promotes GDP release and GTP binding. The alpha subunit has a low GTPase activity that converts bound GTP to GDP, thereby terminating the signal. Both GDP release and GTP hydrolysis are modulated by numerous regulatory proteins. Signaling involves the activation of adenylyl cyclases, resulting in increased levels of the signaling molecule cAMP. Functions downstream of beta-adrenergic receptors. Stimulates the Ras signaling pathway via RAPGEF2. This is Guanine nucleotide-binding protein G(s) subunit alpha isoforms short (GNAS) from Bos taurus (Bovine).